Reading from the N-terminus, the 240-residue chain is uncharacterized protein (240 aa).

The next 2 helical transmembrane spans lie at 16–36 and 67–87; these read AVFF…YFIP and FITA…VIAM.

It is found in the cell membrane. This is an uncharacterized protein from Bacillus subtilis (strain 168).